The primary structure comprises 607 residues: Inactive metallocarboxypeptidase ECM14 (607 aa).

The first 21 residues, 1-21 (MRLFTHGQVLALLAFVNTISA), serve as a signal peptide directing secretion. A propeptide spanning residues 22-174 (IPSFSTNSYP…QTIYESYPSP (153 aa)) is cleaved from the precursor. A Peptidase M14 domain is found at 202–522 (NYQPLSVIVP…NAVMMLGRFL (321 aa)). Zn(2+) is bound by residues H264 and E267. Substrate contacts are provided by residues 264–267 (HARE), R322, and 339–340 (DR). A disulfide bond links C333 and C356. A glycan (N-linked (GlcNAc...) asparagine) is linked at N349. A Zn(2+)-binding site is contributed by H396. Substrate is bound at residue 397–398 (SY). The tract at residues 539-607 (QRPNKDDKPI…GWGFRRLRKR (69 aa)) is disordered. The segment covering 550–571 (NDDDDDDNDDDDDDDDDADTND) has biased composition (acidic residues). Residues 573 to 590 (GIGRKDDSWVPDEYKGDN) show a composition bias toward basic and acidic residues.

The protein belongs to the peptidase M14 family. The cofactor is Zn(2+).

It localises to the vacuole. Its subcellular location is the secreted. Its function is as follows. Inactive carboxypeptidase that may play a role in cell wall organization and biogenesis. The sequence is that of Inactive metallocarboxypeptidase ECM14 (ECM14) from Ajellomyces capsulatus (strain NAm1 / WU24) (Darling's disease fungus).